The chain runs to 288 residues: Phosphatidylserine decarboxylase proenzyme (288 aa).

Catalysis depends on charge relay system; for autoendoproteolytic cleavage activity residues Asp-90, His-147, and Ser-254. Ser-254 (schiff-base intermediate with substrate; via pyruvic acid; for decarboxylase activity) is an active-site residue. Ser-254 carries the pyruvic acid (Ser); by autocatalysis modification.

The protein belongs to the phosphatidylserine decarboxylase family. PSD-B subfamily. Prokaryotic type I sub-subfamily. In terms of assembly, heterodimer of a large membrane-associated beta subunit and a small pyruvoyl-containing alpha subunit. The cofactor is pyruvate. Is synthesized initially as an inactive proenzyme. Formation of the active enzyme involves a self-maturation process in which the active site pyruvoyl group is generated from an internal serine residue via an autocatalytic post-translational modification. Two non-identical subunits are generated from the proenzyme in this reaction, and the pyruvate is formed at the N-terminus of the alpha chain, which is derived from the carboxyl end of the proenzyme. The autoendoproteolytic cleavage occurs by a canonical serine protease mechanism, in which the side chain hydroxyl group of the serine supplies its oxygen atom to form the C-terminus of the beta chain, while the remainder of the serine residue undergoes an oxidative deamination to produce ammonia and the pyruvoyl prosthetic group on the alpha chain. During this reaction, the Ser that is part of the protease active site of the proenzyme becomes the pyruvoyl prosthetic group, which constitutes an essential element of the active site of the mature decarboxylase.

The protein resides in the cell membrane. It catalyses the reaction a 1,2-diacyl-sn-glycero-3-phospho-L-serine + H(+) = a 1,2-diacyl-sn-glycero-3-phosphoethanolamine + CO2. It functions in the pathway phospholipid metabolism; phosphatidylethanolamine biosynthesis; phosphatidylethanolamine from CDP-diacylglycerol: step 2/2. Its function is as follows. Catalyzes the formation of phosphatidylethanolamine (PtdEtn) from phosphatidylserine (PtdSer). This is Phosphatidylserine decarboxylase proenzyme from Hamiltonella defensa subsp. Acyrthosiphon pisum (strain 5AT).